The sequence spans 83 residues: Hepcidin-2 (83 aa).

An N-terminal signal peptide occupies residues 1-26 (MALSTRTQAACLLLLLLASLSSTTYL). A propeptide spanning residues 27-53 (QQQMRQTTELQPLHGEESRADIAIPMQ) is cleaved from the precursor. 4 disulfide bridges follow: Cys65-Cys81, Cys68-Cys71, Cys69-Cys77, and Cys72-Cys80.

The protein belongs to the hepcidin family. In terms of tissue distribution, highly expressed in the liver and to a much lesser extent in the heart. Also expressed in pancreas.

It is found in the secreted. In terms of biological role, seems to act as a signaling molecule involved in the maintenance of iron homeostasis. The polypeptide is Hepcidin-2 (Hamp2) (Mus musculus (Mouse)).